Reading from the N-terminus, the 473-residue chain is Photosystem II CP43 reaction center protein (473 aa).

Positions 1 to 14 (MKILYSQRRFYHVE) are excised as a propeptide. The next 5 membrane-spanning stretches (helical) occupy residues 69-93 (LFEV…PHLA), 134-155 (LIGP…RDKN), 178-200 (KAMF…RYIN), 255-275 (KPFG…LSYS), and 291-312 (WYNN…ASQA). A [CaMn4O5] cluster-binding site is contributed by E367. A helical membrane pass occupies residues 447–471 (RARAAAAGFEKGINRENEPVLSMKL).

This sequence belongs to the PsbB/PsbC family. PsbC subfamily. In terms of assembly, PSII is composed of 1 copy each of membrane proteins PsbA, PsbB, PsbC, PsbD, PsbE, PsbF, PsbH, PsbI, PsbJ, PsbK, PsbL, PsbM, PsbT, PsbY, PsbZ, Psb30/Ycf12, at least 3 peripheral proteins of the oxygen-evolving complex and a large number of cofactors. It forms dimeric complexes. It depends on Binds multiple chlorophylls and provides some of the ligands for the Ca-4Mn-5O cluster of the oxygen-evolving complex. It may also provide a ligand for a Cl- that is required for oxygen evolution. PSII binds additional chlorophylls, carotenoids and specific lipids. as a cofactor.

The protein localises to the plastid. It localises to the chloroplast thylakoid membrane. In terms of biological role, one of the components of the core complex of photosystem II (PSII). It binds chlorophyll and helps catalyze the primary light-induced photochemical processes of PSII. PSII is a light-driven water:plastoquinone oxidoreductase, using light energy to abstract electrons from H(2)O, generating O(2) and a proton gradient subsequently used for ATP formation. This is Photosystem II CP43 reaction center protein from Galdieria sulphuraria (Red alga).